A 116-amino-acid polypeptide reads, in one-letter code: UPF0329 protein ECU05_1650 (116 aa).

The protein belongs to the UPF0329 family.

The chain is UPF0329 protein ECU05_1650 from Encephalitozoon cuniculi (strain GB-M1) (Microsporidian parasite).